The following is a 371-amino-acid chain: 2-aminoethylphosphonate--pyruvate transaminase (371 aa).

K198 carries the post-translational modification N6-(pyridoxal phosphate)lysine.

It belongs to the class-V pyridoxal-phosphate-dependent aminotransferase family. PhnW subfamily. Homodimer. Requires pyridoxal 5'-phosphate as cofactor.

The enzyme catalyses (2-aminoethyl)phosphonate + pyruvate = phosphonoacetaldehyde + L-alanine. In terms of biological role, involved in phosphonate degradation. This chain is 2-aminoethylphosphonate--pyruvate transaminase, found in Syntrophobacter fumaroxidans (strain DSM 10017 / MPOB).